A 64-amino-acid polypeptide reads, in one-letter code: Large ribosomal subunit protein bL35 (64 aa).

The protein belongs to the bacterial ribosomal protein bL35 family.

The sequence is that of Large ribosomal subunit protein bL35 from Vibrio campbellii (strain ATCC BAA-1116).